Here is a 98-residue protein sequence, read N- to C-terminus: MPVVYVNIFLAFIVSLMGLLVYRSHLMSSLLCLEGMMLSLFVMLTVTVLNNHFTLANMAPIILLVFAACEAALGLSLLVMVSNTYGTDYVQNLNLLQC.

A run of 3 helical transmembrane segments spans residues 1-21, 29-49, and 61-81; these read MPVV…GLLV, SLLC…VTVL, and IILL…LVMV.

It belongs to the complex I subunit 4L family. Core subunit of respiratory chain NADH dehydrogenase (Complex I) which is composed of 45 different subunits.

It is found in the mitochondrion inner membrane. The enzyme catalyses a ubiquinone + NADH + 5 H(+)(in) = a ubiquinol + NAD(+) + 4 H(+)(out). Its function is as follows. Core subunit of the mitochondrial membrane respiratory chain NADH dehydrogenase (Complex I) which catalyzes electron transfer from NADH through the respiratory chain, using ubiquinone as an electron acceptor. Part of the enzyme membrane arm which is embedded in the lipid bilayer and involved in proton translocation. This chain is NADH-ubiquinone oxidoreductase chain 4L (MT-ND4L), found in Ursus arctos (Brown bear).